A 499-amino-acid chain; its full sequence is Tyrosine-protein kinase Blk (499 aa).

The tract at residues 1–34 (MGLLSSKRQVSEKGKGWSPVKIRTQDKAPPPLPP) is disordered. Gly-2 carries the N-myristoyl glycine lipid modification. The 61-residue stretch at 52-112 (EEERFVVALF…PSNFVAPVET (61 aa)) folds into the SH3 domain. Residues 118 to 214 (WFFRTISRKD…GLCQKLTLPC (97 aa)) form the SH2 domain. Residues 235-488 (LKLVRKLGSG…FLQSVLEDFY (254 aa)) enclose the Protein kinase domain. ATP is bound by residues 241-249 (LGSGQFGEV) and Lys-263. The Proton acceptor role is filled by Asp-354. Tyr-383 carries the phosphotyrosine; by autocatalysis modification.

This sequence belongs to the protein kinase superfamily. Tyr protein kinase family. SRC subfamily. In terms of assembly, interacts with CBL (via SH2 domain). Interacts with CD79A and CD79B (via SH2 domain). Phosphorylated on tyrosine residues after antibody-mediated surface engagement of the B-cell antigen receptor (BCR). In terms of processing, ubiquitination of activated BLK by the UBE3A ubiquitin protein ligase leads to its degradation by the ubiquitin-proteasome pathway. Expressed in immature Vgamma2 gamma-delta T-cells (at protein level). Expressed in the B-cell lineage.

The protein resides in the cell membrane. The catalysed reaction is L-tyrosyl-[protein] + ATP = O-phospho-L-tyrosyl-[protein] + ADP + H(+). Antibody-mediated surface engagement of the B-cell antigen receptor (BCR) which results in the phosphorylation of BLK on tyrosine residues, stimulates the enzymatic activity. Functionally, non-receptor tyrosine kinase involved in B-lymphocyte development, differentiation and signaling. B-cell receptor (BCR) signaling requires a tight regulation of several protein tyrosine kinases and phosphatases, and associated coreceptors. Binding of antigen to the B-cell antigen receptor (BCR) triggers signaling that ultimately leads to B-cell activation. Signaling through BLK plays an important role in transmitting signals through surface immunoglobulins and supports the pro-B to pre-B transition, as well as the signaling for growth arrest and apoptosis downstream of B-cell receptor. Specifically binds and phosphorylates CD79A at 'Tyr-188'and 'Tyr-199', as well as CD79B at 'Tyr-196' and 'Tyr-207'. Also phosphorylates the immunoglobulin G receptor FCGR2. With FYN and LYN, plays an essential role in pre-B-cell receptor (pre-BCR)-mediated NF-kappa-B activation. Also contributes to BTK activation by indirectly stimulating BTK intramolecular autophosphorylation. In pancreatic islets, acts as a modulator of beta-cells function through the up-regulation of PDX1 and NKX6-1 and consequent stimulation of insulin secretion in response to glucose. Phosphorylates CGAS, promoting retention of CGAS in the cytosol. The chain is Tyrosine-protein kinase Blk (Blk) from Mus musculus (Mouse).